A 144-amino-acid chain; its full sequence is Large ribosomal subunit protein uL15 (144 aa).

A disordered region spans residues 1–52 (MRLNTLSPAEGAKHAPKRVGRGIGSGLGKTAGRGHKGQNSRSGGGVRRGFEG). A compositionally biased stretch (gly residues) spans 21 to 31 (RGIGSGLGKTA).

Belongs to the universal ribosomal protein uL15 family. In terms of assembly, part of the 50S ribosomal subunit.

Functionally, binds to the 23S rRNA. The polypeptide is Large ribosomal subunit protein uL15 (Yersinia pseudotuberculosis serotype O:1b (strain IP 31758)).